A 1781-amino-acid polypeptide reads, in one-letter code: Signal-induced proliferation-associated 1-like protein 3 (1781 aa).

Disordered regions lie at residues 45–166 and 239–332; these read SMSQ…FLPL and TELL…EASR. A compositionally biased stretch (low complexity) spans 54 to 73; sequence PATATATATATTRPSPTTPA. Basic and acidic residues predominate over residues 87–97; the sequence is PPKREALREHS. At serine 100 the chain carries Phosphoserine. Residues 118–135 are compositionally biased toward polar residues; that stretch reads RSIQNGQPPTSTPASSGS. Positions 137–146 are enriched in basic residues; sequence AFHRLSRRRS. Serine 146 bears the Phosphoserine mark. Phosphoserine is present on serine 401. Positions 611 to 828 constitute a Rap-GAP domain; the sequence is LLKLDEQGLC…RTRQEYLKDL (218 aa). The PDZ domain occupies 966 to 1042; the sequence is DMTLRRNGLG…VKVVIIPPFE (77 aa). Disordered regions lie at residues 1046–1112, 1124–1221, 1236–1565, and 1583–1636; these read PRRG…SLSR, ESQP…QKPE, AGSS…GLEP, and TLPA…RLDP. 2 stretches are compositionally biased toward polar residues: residues 1080-1111 and 1157-1166; these read APWQ…QSLS and PSGSFSTPGS. Residues 1196–1210 show a composition bias toward low complexity; the sequence is DGTSSGDSSSGGLTS. Basic and acidic residues predominate over residues 1245–1261; it reads SRQDAAGKDSPNRHSKG. Over residues 1266–1281 the composition is skewed to low complexity; the sequence is SSHSSSNTLSSNASSS. Polar residues predominate over residues 1304–1322; that stretch reads GGSSDSGIDTTLYTSSPSC. Serine 1364 is subject to Phosphoserine. A Phosphothreonine modification is found at threonine 1387. Over residues 1425-1441 the composition is skewed to polar residues; it reads RPSQLAQPSPFQLSASV. An N6-acetyllysine modification is found at lysine 1448. Basic and acidic residues predominate over residues 1509–1518; that stretch reads TIEDDLKKLI. Over residues 1532 to 1547 the composition is skewed to polar residues; it reads GQSPQKGLQRTLSDES. Phosphoserine occurs at positions 1544 and 1547. A compositionally biased stretch (low complexity) spans 1599-1609; it reads PGATPAAGSGF. Serine 1619 and serine 1622 each carry phosphoserine. Basic and acidic residues predominate over residues 1625–1635; that stretch reads DGRDRPLRRLD. Serine 1677 carries the phosphoserine modification. The interval 1685 to 1712 is disordered; the sequence is SPVHSHLSLERGPPTPRTTPTMSEEPPL. Residues threonine 1699 and threonine 1703 each carry the phosphothreonine modification. Residues 1720-1774 are a coiled coil; that stretch reads QLEVMLKQLHTDLQKEKQDKVVLQSEVASLRQNNQRLQEESQAASEQLRKFAEIF.

It is found in the apical cell membrane. Functionally, plays a critical role in epithelial cell morphogenesis, polarity, adhesion and cytoskeletal organization in the lens. The chain is Signal-induced proliferation-associated 1-like protein 3 (SIPA1L3) from Homo sapiens (Human).